Consider the following 154-residue polypeptide: Protein phosphatase 1 regulatory subunit 27 (154 aa).

ANK repeat units lie at residues 63-92 (SGLA…DIHQ) and 96-125 (AGWT…DRDA).

Interacts with DYSF and PPP1CA.

Functionally, inhibits phosphatase activity of protein phosphatase 1 (PP1) complexes. This Homo sapiens (Human) protein is Protein phosphatase 1 regulatory subunit 27 (PPP1R27).